A 569-amino-acid chain; its full sequence is Proline--tRNA ligase (569 aa).

This sequence belongs to the class-II aminoacyl-tRNA synthetase family. ProS type 1 subfamily. Homodimer.

It localises to the cytoplasm. It carries out the reaction tRNA(Pro) + L-proline + ATP = L-prolyl-tRNA(Pro) + AMP + diphosphate. In terms of biological role, catalyzes the attachment of proline to tRNA(Pro) in a two-step reaction: proline is first activated by ATP to form Pro-AMP and then transferred to the acceptor end of tRNA(Pro). As ProRS can inadvertently accommodate and process non-cognate amino acids such as alanine and cysteine, to avoid such errors it has two additional distinct editing activities against alanine. One activity is designated as 'pretransfer' editing and involves the tRNA(Pro)-independent hydrolysis of activated Ala-AMP. The other activity is designated 'posttransfer' editing and involves deacylation of mischarged Ala-tRNA(Pro). The misacylated Cys-tRNA(Pro) is not edited by ProRS. This is Proline--tRNA ligase from Nitratiruptor sp. (strain SB155-2).